A 71-amino-acid chain; its full sequence is SRY-related protein LG28 (71 aa).

Positions 1-68 (VKRPMNAFMV…KHMADYPDYK (68 aa)) form a DNA-binding region, HMG box.

It is found in the nucleus. The chain is SRY-related protein LG28 from Eublepharis macularius (Leopard gecko).